Reading from the N-terminus, the 338-residue chain is Holliday junction branch migration complex subunit RuvB (338 aa).

Positions 1-181 (MEERILTQNF…FGVINRLDYY (181 aa)) are large ATPase domain (RuvB-L). ATP-binding positions include Leu20, Arg21, Gly62, Lys65, Thr66, Thr67, 128–130 (EDF), Arg171, Tyr181, and Arg218. Thr66 provides a ligand contact to Mg(2+). Positions 182–252 (SVEELKEIIK…TANIALNMLG (71 aa)) are small ATPAse domain (RuvB-S). The segment at 255–338 (EMGLEEIDRK…YVEQRRIEDV (84 aa)) is head domain (RuvB-H). 2 residues coordinate DNA: Arg310 and Arg315.

The protein belongs to the RuvB family. Homohexamer. Forms an RuvA(8)-RuvB(12)-Holliday junction (HJ) complex. HJ DNA is sandwiched between 2 RuvA tetramers; dsDNA enters through RuvA and exits via RuvB. An RuvB hexamer assembles on each DNA strand where it exits the tetramer. Each RuvB hexamer is contacted by two RuvA subunits (via domain III) on 2 adjacent RuvB subunits; this complex drives branch migration. In the full resolvosome a probable DNA-RuvA(4)-RuvB(12)-RuvC(2) complex forms which resolves the HJ.

Its subcellular location is the cytoplasm. The catalysed reaction is ATP + H2O = ADP + phosphate + H(+). Its function is as follows. The RuvA-RuvB-RuvC complex processes Holliday junction (HJ) DNA during genetic recombination and DNA repair, while the RuvA-RuvB complex plays an important role in the rescue of blocked DNA replication forks via replication fork reversal (RFR). RuvA specifically binds to HJ cruciform DNA, conferring on it an open structure. The RuvB hexamer acts as an ATP-dependent pump, pulling dsDNA into and through the RuvAB complex. RuvB forms 2 homohexamers on either side of HJ DNA bound by 1 or 2 RuvA tetramers; 4 subunits per hexamer contact DNA at a time. Coordinated motions by a converter formed by DNA-disengaged RuvB subunits stimulates ATP hydrolysis and nucleotide exchange. Immobilization of the converter enables RuvB to convert the ATP-contained energy into a lever motion, pulling 2 nucleotides of DNA out of the RuvA tetramer per ATP hydrolyzed, thus driving DNA branch migration. The RuvB motors rotate together with the DNA substrate, which together with the progressing nucleotide cycle form the mechanistic basis for DNA recombination by continuous HJ branch migration. Branch migration allows RuvC to scan DNA until it finds its consensus sequence, where it cleaves and resolves cruciform DNA. The sequence is that of Holliday junction branch migration complex subunit RuvB from Caldanaerobacter subterraneus subsp. tengcongensis (strain DSM 15242 / JCM 11007 / NBRC 100824 / MB4) (Thermoanaerobacter tengcongensis).